A 228-amino-acid polypeptide reads, in one-letter code: Ras-related protein Rab-33B (228 aa).

GTP-binding residues include asparagine 41, valine 42, glycine 43, lysine 44, threonine 45, cysteine 46, threonine 60, and threonine 63. A Mg(2+)-binding site is contributed by threonine 45. Positions 54 to 66 (GRFPQRTEATIGV) match the Switch 1 motif. The Mg(2+) site is built by threonine 63 and aspartate 86. The short motif at 87–106 (TAGQERFRKSMVQHYYRNVH) is the Switch 2 element. Residues glycine 89, asparagine 146, lysine 147, aspartate 149, alanine 177, and lysine 178 each coordinate GTP. Residues cysteine 226 and cysteine 228 are each lipidated (S-geranylgeranyl cysteine). Position 228 is a cysteine methyl ester (cysteine 228).

It belongs to the small GTPase superfamily. Rab family. As to quaternary structure, interacts (GTP- and GDP-bound forms) with ATG16L1; the complex consists of a tetramer where two RAB33B molecules bind independently one molecule of the ATG16L1 homodimer; the interaction promotes ATG12-ATG5-ATG16L1 complex recruitment to phagophores. Interacts with ATG16L2; however interaction is approximately hundred times lower than for ATG16L1. Interacts with RIC1 (via C-terminus domain); the interaction is direct with a preference for RAB33B-GTP. Interacts with RGP1. Mg(2+) is required as a cofactor.

It is found in the golgi apparatus membrane. Its subcellular location is the golgi apparatus. The protein resides in the cis-Golgi network. It localises to the preautophagosomal structure membrane. The enzyme catalyses GTP + H2O = GDP + phosphate + H(+). With respect to regulation, regulated by guanine nucleotide exchange factors (GEFs) which promote the exchange of bound GDP for free GTP. Regulated by GTPase activating proteins (GAPs) such as SGSM2 which increase the GTP hydrolysis activity. Inhibited by GDP dissociation inhibitors (GDIs). Functionally, the small GTPases Rab are key regulators of intracellular membrane trafficking, from the formation of transport vesicles to their fusion with membranes. Rabs cycle between an inactive GDP-bound form and an active GTP-bound form that is able to recruit to membranes different sets of downstream effectors directly responsible for vesicle formation, movement, tethering and fusion. RAB33B acts, in coordination with RAB6A, to regulate intra-Golgi retrograde trafficking. Participates in autophagosome formation by recruiting the ATG12-ATG5-ATG16L1 complex to phagophores, probably in a nucleotide-independent manner. The chain is Ras-related protein Rab-33B (RAB33B) from Gallus gallus (Chicken).